The chain runs to 424 residues: Dihydroorotase (424 aa).

Residues His-58 and His-60 each contribute to the Zn(2+) site. Residues 60–62 (HLR) and Asn-92 each bind substrate. Residues Asp-150, His-177, and His-230 each coordinate Zn(2+). Asn-276 lines the substrate pocket. A Zn(2+)-binding site is contributed by Asp-303. Asp-303 is an active-site residue. Substrate is bound by residues His-307 and 321-322 (FG).

It belongs to the metallo-dependent hydrolases superfamily. DHOase family. Class I DHOase subfamily. Zn(2+) serves as cofactor.

It catalyses the reaction (S)-dihydroorotate + H2O = N-carbamoyl-L-aspartate + H(+). It participates in pyrimidine metabolism; UMP biosynthesis via de novo pathway; (S)-dihydroorotate from bicarbonate: step 3/3. Functionally, catalyzes the reversible cyclization of carbamoyl aspartate to dihydroorotate. The polypeptide is Dihydroorotase (Staphylococcus aureus (strain MRSA252)).